The primary structure comprises 370 residues: Calcium-binding protein 1 (370 aa).

The interval 1–198 (MGGGDGAAFK…GRGDSVPAAA (198 aa)) is disordered. Gly-2 carries the N-myristoyl glycine lipid modification. Gly-4 is lipidated: S-palmitoyl cysteine. 3 stretches are compositionally biased toward low complexity: residues 50–61 (HASAGPAAMSSH), 68–84 (KTSL…GGSR), and 148–157 (ALPAAASRPS). EF-hand domains lie at 225–260 (EEIE…MGYM), 279–296 (GHVD…KLLA), 302–337 (IGVK…LLGH), and 339–370 (VGHR…MMSR). Positions 238, 240, 242, 244, and 249 each coordinate Ca(2+). Mg(2+) contacts are provided by Asp-238, Asp-240, Asp-242, and Tyr-244. The Ca(2+) site is built by Asp-315, Asn-317, Asp-319, and Glu-321. Ser-323 carries the phosphoserine modification. 9 residues coordinate Ca(2+): Glu-326, Asp-352, Leu-353, Asn-354, Asp-356, Gly-357, Arg-358, Asp-360, and Glu-363.

As to quaternary structure, homodimer; when bound to calcium or magnesium. Interacts (via C-terminus) with ITPR1, ITPR2 and ITPR3. This binding is calcium dependent and the interaction correlates with calcium concentration. An additional calcium-independent interaction with the N-terminus of ITPR1 results in a decreased InsP(3) binding to the receptor. Interacts with CACNA1A (via C-terminal CDB motif) in the pre- and postsynaptic membranes. Interacts with CACNA1C (via C-terminal C and IQ motifs). The binding to the C motif is calcium independent whereas the binding to IQ requires the presence of calcium and is mutually exclusive with calmodulin binding. Interacts with CACNA1D. Interacts with TRPC5 (via C-terminus). Interacts (via EF-hands 1 and 2) at microtubules with MAP1LC3B. Interacts with MYO1C. Interacts (via EF-hands 1 and 2) with NSMF (via the central NLS-containing motif region), the interaction occurs in a calcium dependent manner after synaptic NMDA receptor stimulation and prevents nuclear import of NSMF. Interacts with SPACA9. Phosphorylated. The phosphorylation regulates the activity. Retina and brain. Somatodendritic compartment of neurons. Calbrain was found exclusively in brain where it is abundant in the hippocampus, habenular area in the epithalamus and in the cerebellum.

The protein localises to the cytoplasm. It localises to the cytoskeleton. The protein resides in the perinuclear region. Its subcellular location is the cell membrane. It is found in the golgi apparatus. The protein localises to the postsynaptic density. It localises to the cell cortex. Its function is as follows. Modulates calcium-dependent activity of inositol 1,4,5-triphosphate receptors (ITPRs). Inhibits agonist-induced intracellular calcium signaling. Enhances inactivation and does not support calcium-dependent facilitation of voltage-dependent P/Q-type calcium channels. Causes calcium-dependent facilitation and inhibits inactivation of L-type calcium channels by binding to the same sites as calmodulin in the C-terminal domain of CACNA1C, but has an opposite effect on channel function. Suppresses the calcium-dependent inactivation of CACNA1D. Inhibits TRPC5 channels. Prevents NMDA receptor-induced cellular degeneration. Required for the normal transfer of light signals through the retina. The protein is Calcium-binding protein 1 (CABP1) of Homo sapiens (Human).